The primary structure comprises 288 residues: Borealin (288 aa).

The segment at methionine 1–valine 58 is required for interaction with INCENP. The tract at residues methionine 1–threonine 88 is required for centromere localization. Residues methionine 1 to alanine 149 are required for interaction with SENP3. Residues glycine 10–lysine 109 form a required to form a minimal CPC core complex that localizes to the central spindle and midbody and properly executes the role of the CPC during cytokinesis region. The segment at lysine 20–glycine 78 is required for interaction with INCENP and BIRC5. Threonine 88 carries the post-translational modification Phosphothreonine; by TTK. Arginine 91 carries the citrulline modification. Phosphothreonine; by TTK is present on threonine 94. Threonine 106 carries the post-translational modification Phosphothreonine. Serine 110 carries the phosphoserine modification. A compositionally biased stretch (acidic residues) spans lysine 124–glycine 134. A disordered region spans residues lysine 124–leucine 173. Positions arginine 140 to threonine 161 are enriched in basic residues. A Glycyl lysine isopeptide (Lys-Gly) (interchain with G-Cter in SUMO2) cross-link involves residue lysine 144. At serine 174 the chain carries Phosphoserine; by AURKB. Phosphothreonine occurs at positions 197 and 212. Phosphoserine occurs at positions 227, 232, 246, and 252.

It belongs to the borealin family. As to quaternary structure, may form homooligomers and homodimers. Component of the chromosomal passenger complex (CPC) composed of at least BIRC5/survivin, CDCA8/borealin, INCENP, AURKB or AURKC; in the complex forms a triple-helix bundle-based subcomplex with INCENP and BIRC5. Interacts with SENP3, UBE2I and RANBP2. Interacts (phosphorylated) with SGO1 and SGO2; the association is dependent on CDK1. In terms of processing, phosphorylated by TTK, essentially at Thr-88 and Thr-94. Phosphorylation (probably by CDK1) promotes targeting of the CPC to centromeric DNA. Post-translationally, sumoylated by UBE2I and RANBP2. Desumoylated by SENP3 through the removal of SUMO2 and SUMO3. Citrullinated by PADI4.

It is found in the nucleus. Its subcellular location is the nucleolus. The protein localises to the cytoplasm. The protein resides in the chromosome. It localises to the centromere. It is found in the cytoskeleton. Its subcellular location is the spindle. Functionally, component of the chromosomal passenger complex (CPC), a complex that acts as a key regulator of mitosis. The CPC complex has essential functions at the centromere in ensuring correct chromosome alignment and segregation and is required for chromatin-induced microtubule stabilization and spindle assembly. In the complex, it may be required to direct the CPC to centromeric DNA. The protein is Borealin (Cdca8) of Rattus norvegicus (Rat).